We begin with the raw amino-acid sequence, 857 residues long: Leucine--tRNA ligase (857 aa).

A 'HIGH' region motif is present at residues 42–52 (PYPSGKLHMGH). The short motif at 620–624 (KMSKS) is the 'KMSKS' region element. ATP is bound at residue Lys623.

Belongs to the class-I aminoacyl-tRNA synthetase family.

The protein resides in the cytoplasm. The enzyme catalyses tRNA(Leu) + L-leucine + ATP = L-leucyl-tRNA(Leu) + AMP + diphosphate. This is Leucine--tRNA ligase from Thiobacillus denitrificans (strain ATCC 25259 / T1).